We begin with the raw amino-acid sequence, 349 residues long: Fe(3+) ions import ATP-binding protein FbpC (349 aa).

An ABC transporter domain is found at 4–236; sequence LDFNKIGKSY…PIDEPTATFL (233 aa). 36 to 43 contacts ATP; it reads GPSGSGKT.

The protein belongs to the ABC transporter superfamily. Fe(3+) ion importer (TC 3.A.1.10) family. As to quaternary structure, the complex is composed of two ATP-binding proteins (FbpC), two transmembrane proteins (FbpB) and a solute-binding protein (FbpA).

It localises to the cell inner membrane. The enzyme catalyses Fe(3+)(out) + ATP + H2O = Fe(3+)(in) + ADP + phosphate + H(+). Functionally, part of the ABC transporter complex FbpABC involved in Fe(3+) ions import. Responsible for energy coupling to the transport system. The protein is Fe(3+) ions import ATP-binding protein FbpC of Yersinia enterocolitica.